A 273-amino-acid chain; its full sequence is Dermonecrotic toxin SdSicTox-betaIIB1bxi (273 aa).

Residue His-4 is part of the active site. Mg(2+)-binding residues include Glu-24 and Asp-26. His-40 serves as the catalytic Nucleophile. 2 disulfide bridges follow: Cys-44-Cys-50 and Cys-46-Cys-189. Asp-84 is a Mg(2+) binding site.

The protein belongs to the arthropod phospholipase D family. Class II subfamily. Mg(2+) is required as a cofactor. In terms of tissue distribution, expressed by the venom gland.

Its subcellular location is the secreted. The enzyme catalyses an N-(acyl)-sphingosylphosphocholine = an N-(acyl)-sphingosyl-1,3-cyclic phosphate + choline. The catalysed reaction is an N-(acyl)-sphingosylphosphoethanolamine = an N-(acyl)-sphingosyl-1,3-cyclic phosphate + ethanolamine. It catalyses the reaction a 1-acyl-sn-glycero-3-phosphocholine = a 1-acyl-sn-glycero-2,3-cyclic phosphate + choline. It carries out the reaction a 1-acyl-sn-glycero-3-phosphoethanolamine = a 1-acyl-sn-glycero-2,3-cyclic phosphate + ethanolamine. Its function is as follows. Dermonecrotic toxins cleave the phosphodiester linkage between the phosphate and headgroup of certain phospholipids (sphingolipid and lysolipid substrates), forming an alcohol (often choline) and a cyclic phosphate. This toxin acts on sphingomyelin (SM). It may also act on ceramide phosphoethanolamine (CPE), lysophosphatidylcholine (LPC) and lysophosphatidylethanolamine (LPE), but not on lysophosphatidylserine (LPS), and lysophosphatidylglycerol (LPG). It acts by transphosphatidylation, releasing exclusively cyclic phosphate products as second products. Induces dermonecrosis, hemolysis, increased vascular permeability, edema, inflammatory response, and platelet aggregation. The chain is Dermonecrotic toxin SdSicTox-betaIIB1bxi from Sicarius cf. damarensis (strain GJB-2008) (Six-eyed sand spider).